The primary structure comprises 480 residues: REST corepressor 1 (480 aa).

The disordered stretch occupies residues 1–105 (MPAMVEKGPE…GGGMRVGPQY (105 aa)). Low complexity-rich tracts occupy residues 21–58 (AASA…AAAA) and 66–89 (SLAA…SGSS). The segment at 72 to 251 (PNGNSGSNSW…RHARKQKRER (180 aa)) is interaction with HDAC1. The ELM2 domain occupies 97-183 (GGMRVGPQYQ…KSLADLPNFT (87 aa)). A Glycyl lysine isopeptide (Lys-Gly) (interchain with G-Cter in SUMO2) cross-link involves residue K116. S121 is modified (phosphoserine). An SANT 1 domain is found at 184 to 235 (PFPDEWTVEDKVLFEQAFSFHGKTFHRIQQMLPDKSIASLVKFYYSWKKTRT). Residues 238-265 (SVMDRHARKQKREREESEDELEETNGSN) adopt a coiled-coil conformation. The segment at 238-308 (SVMDRHARKQ…AKNRAKRKPP (71 aa)) is disordered. S254 is modified (phosphoserine). Over residues 272–282 (DPNKESKKEVP) the composition is skewed to basic and acidic residues. The segment at 290 to 378 (VKKEKHSTQA…LPEVIQKCNA (89 aa)) is interaction with KDM1A. Residue K291 forms a Glycyl lysine isopeptide (Lys-Gly) (interchain with G-Cter in SUMO2) linkage. Positions 328–363 (ATTVLRQLDMELVSIKRQIQNIKQTNSALKEKLDGG) form a coiled coil. An SANT 2 domain is found at 375–426 (KCNARWTTEEQLLAVQAIRKYGRDFQAISDVIGNKSVVQVKNFFVNYRRRFN). Residues 436–466 (AEHGKDETNGPANQKPVKSPESSIKIPEEED) form a disordered region. S454 is modified (phosphoserine). Residue K460 forms a Glycyl lysine isopeptide (Lys-Gly) (interchain with G-Cter in SUMO2) linkage.

The protein belongs to the CoREST family. As to quaternary structure, component of a BHC histone deacetylase complex that contains HDAC1, HDAC2, HMG20B/BRAF35, KDM1A, RCOR1/CoREST and PHF21A/BHC80. The BHC complex may also contain ZMYM2, ZNF217, ZMYM3, GSE1 and GTF2I. Interacts with REST. Interacts with the SMARCE1/BAF57, suggesting that the BHC complex may recruit the ATP-dependent chromatin-remodeling SWI-SNF complex. Interacts directly with GFI1 and GFI1B in a RCOR/GFI/KDM1A/HDAC complex. Interacts with INMS1. Interacts with SOX2. In terms of tissue distribution, expressed in the external germinal layer (EGL) and internal granular layer (IGL) of the cerebellum and in Purkinje cells (at protein level).

It is found in the nucleus. Its function is as follows. Essential component of the BHC complex, a corepressor complex that represses transcription of neuron-specific genes in non-neuronal cells. The BHC complex is recruited at RE1/NRSE sites by REST and acts by deacetylating and demethylating specific sites on histones, thereby acting as a chromatin modifier. In the BHC complex, it serves as a molecular beacon for the recruitment of molecular machinery, including MeCP2 and SUV39H1, that imposes silencing across a chromosomal interval. Plays a central role in demethylation of Lys-4 of histone H3 by promoting demethylase activity of KDM1A on core histones and nucleosomal substrates. It also protects KDM1A from the proteasome. Component of a RCOR/GFI/KDM1A/HDAC complex that suppresses, via histone deacetylase (HDAC) recruitment, a number of genes implicated in multilineage blood cell development and controls hematopoietic differentiation. This is REST corepressor 1 (Rcor1) from Mus musculus (Mouse).